Here is a 64-residue protein sequence, read N- to C-terminus: Large ribosomal subunit protein bL35c (64 aa).

Belongs to the bacterial ribosomal protein bL35 family.

It localises to the plastid. The protein resides in the chloroplast. In Cyanidium caldarium (Red alga), this protein is Large ribosomal subunit protein bL35c.